The chain runs to 378 residues: Transcription initiation factor IIA subunit 1 (378 aa).

N-acetylalanine is present on A2. Low complexity-rich tracts occupy residues 69–79 (QVQQQHQPQQQ), 89–106 (QQAQ…TQQV), and 247–281 (PAQA…TGDT). Disordered regions lie at residues 69-108 (QVQQ…QVLI) and 247-331 (PAQA…QELF). 4 positions are modified to phosphoserine; by TAF1: S282, S283, S318, and S323. Residues 282–331 (SSEEDEDEEEDYDDDEEEDKEKDGAEDGQVEEEPLNSEDDVSDEEGQELF) show a composition bias toward acidic residues. The DNA site is built by H345 and R346.

The protein belongs to the TFIIA subunit 1 family. In terms of assembly, TFIIA is a heterodimer of the large unprocessed subunit 1 and a small subunit gamma. It was originally believed to be a heterotrimer of an alpha (p35), a beta (p19) and a gamma subunit (p12). TFIIA forms a complex with TBP. Part of TBP-based Pol II pre-initiation complex (PIC), in which Pol II core assembles with general transcription factors and other specific initiation factors including GTF2E1, GTF2E2, GTF2F1, GTF2F2, TCEA1, ERCC2, ERCC3, GTF2H2, GTF2H3, GTF2H4, GTF2H5, GTF2A1, GTF2A2, GTF2B and TBP; this large multi-subunit PIC complex mediates DNA unwinding and targets Pol II core to the transcription start site where the first phosphodiester bond forms. Post-translationally, the alpha and beta subunits are postranslationally produced from the precursor form by TASP1. The cleavage promotes proteasomal degradation. In terms of tissue distribution, expressed in pachytene spermatocytes and spermatids.

Its subcellular location is the nucleus. In terms of biological role, TFIIA is a component of the transcription machinery of RNA polymerase II and plays an important role in transcriptional activation. TFIIA in a complex with TBP mediates transcriptional activity. The chain is Transcription initiation factor IIA subunit 1 (Gtf2a1) from Mus musculus (Mouse).